The sequence spans 353 residues: Photosystem II D2 protein (353 aa).

Threonine 2 bears the N-acetylthreonine mark. Threonine 2 carries the phosphothreonine modification. A helical transmembrane segment spans residues 41–61; it reads CAYFALGGWFTGTTFVTSWYT. Histidine 118 is a chlorophyll a binding site. The chain crosses the membrane as a helical span at residues 125 to 141; it reads GFMLRQFELARSVQLRP. The pheophytin a site is built by glutamine 130 and asparagine 143. Residues 153–166 traverse the membrane as a helical segment; it reads VFVSVFLIYPLGQS. Histidine 198 contacts chlorophyll a. A helical membrane pass occupies residues 208 to 228; that stretch reads AALLCAIHGATVENTLFEDGD. Residues histidine 215 and phenylalanine 262 each contribute to the a plastoquinone site. Histidine 215 lines the Fe cation pocket. Histidine 269 contributes to the Fe cation binding site. The helical transmembrane segment at 279–295 threads the bilayer; that stretch reads GLWMSAIGVVGLALNLR.

The protein belongs to the reaction center PufL/M/PsbA/D family. As to quaternary structure, PSII is composed of 1 copy each of membrane proteins PsbA, PsbB, PsbC, PsbD, PsbE, PsbF, PsbH, PsbI, PsbJ, PsbK, PsbL, PsbM, PsbT, PsbX, PsbY, PsbZ, Psb30/Ycf12, at least 3 peripheral proteins of the oxygen-evolving complex and a large number of cofactors. It forms dimeric complexes. The D1/D2 heterodimer binds P680, chlorophylls that are the primary electron donor of PSII, and subsequent electron acceptors. It shares a non-heme iron and each subunit binds pheophytin, quinone, additional chlorophylls, carotenoids and lipids. There is also a Cl(-1) ion associated with D1 and D2, which is required for oxygen evolution. The PSII complex binds additional chlorophylls, carotenoids and specific lipids. serves as cofactor. Phosphorylated on threonine residue(s); phosphorylation increases with increasing light levels.

Its subcellular location is the plastid. It localises to the chloroplast thylakoid membrane. The catalysed reaction is 2 a plastoquinone + 4 hnu + 2 H2O = 2 a plastoquinol + O2. Its function is as follows. Photosystem II (PSII) is a light-driven water:plastoquinone oxidoreductase that uses light energy to abstract electrons from H(2)O, generating O(2) and a proton gradient subsequently used for ATP formation. It consists of a core antenna complex that captures photons, and an electron transfer chain that converts photonic excitation into a charge separation. The D1/D2 (PsbA/PsbD) reaction center heterodimer binds P680, the primary electron donor of PSII as well as several subsequent electron acceptors. D2 is needed for assembly of a stable PSII complex. The protein is Photosystem II D2 protein of Marchantia polymorpha (Common liverwort).